Reading from the N-terminus, the 428-residue chain is MKTSLFKSLYFQVLTAIAIGILLGHYYPELGAQMKPLGDAFVKLIKMIIAPVIFCTVVTGIAGMESMKAVGRTGAVALLYFEIVSTIALIIGLIIVNVVQPGAGMNVDPATLDAQAVAVYAAQAKEQGIIAFLMDVIPGSVIGAFASGNILQVLLFAVLFGFALHRLGSKGQLIFNVIESFSQVIFGIINMIMRLAPIGAFGAMAFTIGKYGVGSLVQLGQLIICFYITCILFVVVVLGTIARVTGFSIFKFIRYIREELLIVLGTSSSESALPRMLDKMEKLGCRKSVVGLVIPTGYSFNLDGTSIYLTMAAVFIAQATNSHMDIFHQITLLVVLLLSSKGAAGVTGSGFIVLAATISAVGHLPVAGLALILGIDRFMSEARALTNLVGNGVATVVVAKWVKELDHQKLDDVLNNRAPDGKTHEISF.

9 helical membrane-spanning segments follow: residues 4-24 (SLFK…ILLG), 44-64 (LIKM…IAGM), 76-96 (VALL…LIIV), 142-162 (IGAF…LFGF), 184-204 (VIFG…FGAM), 222-242 (LIIC…GTIA), 289-309 (VVGL…SIYL), 326-346 (IFHQ…AAGV), and 352-372 (IVLA…LALI).

The protein belongs to the dicarboxylate/amino acid:cation symporter (DAACS) (TC 2.A.23) family.

It localises to the cell inner membrane. Its function is as follows. Responsible for the transport of dicarboxylates such as succinate, fumarate, and malate from the periplasm across the membrane. The polypeptide is C4-dicarboxylate transport protein (Salmonella gallinarum (strain 287/91 / NCTC 13346)).